The sequence spans 353 residues: ATP-dependent kinase YFH7 (353 aa).

Residue 31 to 39 (GSPGSGKST) coordinates ATP.

It belongs to the YFH7 family.

ATP-dependent kinase that could be involved in endoplasmic reticulum membrane assembly. In Saccharomyces cerevisiae (strain Lalvin EC1118 / Prise de mousse) (Baker's yeast), this protein is ATP-dependent kinase YFH7 (YFH7).